The primary structure comprises 33 residues: Beta-theraphotoxin-Cm1b (33 aa).

3 disulfides stabilise this stretch: Cys2–Cys17, Cys9–Cys22, and Cys16–Cys29. Residue Leu33 is modified to Leucine amide.

This sequence belongs to the neurotoxin 10 (Hwtx-1) family. 04 (CcoTx1) subfamily. In terms of tissue distribution, expressed by the venom gland.

The protein localises to the secreted. In terms of biological role, inhibits several voltage-gated sodium channels and only one voltage-gated calcium channel (Cav2.2/CACNA1B (IC(50)=1.1 uM) and Nav1.2/SCN2A (IC(50)=3.7-80 nM), Nav1.3/SCN3A (IC(50)=88-5570 nM), Nav1.1/SCN1A (IC(50)=170-407 nM), Nav1.7/SCN9A (IC(50)=95.5-230 nM), Nav1.6/SCN6A (IC(50)=49.9-3990 nM), Nav1.4/SCN4A (IC(50)=113-400 nM or &gt;10 uM), Nav1.5/SCN5A (IC(50)=1524-1634 nM or &gt;10 uM)). The toxin acts by shifting the voltage dependence of channel activation to more depolarized potentials and by blocking the inward component of the sodium current. It shows moderate affinity for lipid bilayers without cholesterol and high affinity for lipid bilayers containing cholesterol. In vivo, this toxin causes general ataxia, lack of response to stimuli, and semiparalysis. After a few minutes, the mice are unable to stand, and breathing is reduced in rhythm and intensity. Symptoms gradually increase with progressive slowing of breathing and flaccid paralysis; death occurred within 10 to 20 minutes post injection. Animals remain totally flaccid, and no symptoms of excitatory neurotoxicity are observed. The chain is Beta-theraphotoxin-Cm1b from Ceratogyrus marshalli (Straighthorned baboon tarantula).